Here is a 1001-residue protein sequence, read N- to C-terminus: 2-oxoglutarate dehydrogenase E1 component (1001 aa).

The protein belongs to the alpha-ketoglutarate dehydrogenase family. As to quaternary structure, homodimer. Part of the 2-oxoglutarate dehydrogenase (OGDH) complex composed of E1 (2-oxoglutarate dehydrogenase), E2 (dihydrolipoamide succinyltransferase) and E3 (dihydrolipoamide dehydrogenase); the complex contains multiple copies of the three enzymatic components (E1, E2 and E3). It depends on thiamine diphosphate as a cofactor.

The catalysed reaction is N(6)-[(R)-lipoyl]-L-lysyl-[protein] + 2-oxoglutarate + H(+) = N(6)-[(R)-S(8)-succinyldihydrolipoyl]-L-lysyl-[protein] + CO2. Functionally, E1 component of the 2-oxoglutarate dehydrogenase (OGDH) complex which catalyzes the decarboxylation of 2-oxoglutarate, the first step in the conversion of 2-oxoglutarate to succinyl-CoA and CO(2). The protein is 2-oxoglutarate dehydrogenase E1 component of Brucella anthropi (strain ATCC 49188 / DSM 6882 / CCUG 24695 / JCM 21032 / LMG 3331 / NBRC 15819 / NCTC 12168 / Alc 37) (Ochrobactrum anthropi).